Reading from the N-terminus, the 146-residue chain is Leghemoglobin Lb120-1 (146 aa).

The 145-residue stretch at 2 to 146 folds into the Globin domain; that stretch reads GFTEKQEALV…LASAIKKAMN (145 aa). Nitrated tyrosine is present on residues Y24 and Y29. S44 is a heme b binding site. Position 44 is a phosphoserine (S44). H61 is a binding site for O2. Heme b is bound by residues K64, H93, and K96. Residue Y134 is modified to Nitrated tyrosine.

It belongs to the plant globin family. As to quaternary structure, monomer. Nitrated in effective nodules and particularly in hypoxic conditions; this mechanism may play a protective role in the symbiosis by buffering toxic peroxynitrite NO(2)(-). Nitration level decrease during nodule senescence. In terms of processing, phosphorylation at Ser-44 disrupts the molecular environment of its porphyrin ring oxygen binding pocket, thus leading to a reduced oxygen consumption and to the delivery of oxygen O(2) to symbiosomes. In terms of tissue distribution, root nodules.

The protein resides in the cytoplasm. It localises to the cytosol. It is found in the nucleus. In terms of biological role, leghemoglobin that reversibly binds oxygen O(2) through a pentacoordinated heme iron. In root nodules, facilitates the diffusion of oxygen to the bacteroids while preventing the bacterial nitrogenase from being inactivated by buffering dioxygen, nitric oxide and carbon monoxide, and promoting the formation of reactive oxygen species (ROS, e.g. H(2)O(2)). This role is essential for symbiotic nitrogen fixation (SNF). This Pisum sativum (Garden pea) protein is Leghemoglobin Lb120-1.